The sequence spans 214 residues: Redox-sensing transcriptional repressor Rex (214 aa).

The H-T-H motif DNA-binding region spans 17 to 56; it reads KYHRYLEELLKSDVDRISSKELSEKIGFTASQIRQDLNCF. 91 to 96 is an NAD(+) binding site; sequence GAGNIG.

This sequence belongs to the transcriptional regulatory Rex family. Homodimer.

It localises to the cytoplasm. In terms of biological role, modulates transcription in response to changes in cellular NADH/NAD(+) redox state. In Clostridium acetobutylicum (strain ATCC 824 / DSM 792 / JCM 1419 / IAM 19013 / LMG 5710 / NBRC 13948 / NRRL B-527 / VKM B-1787 / 2291 / W), this protein is Redox-sensing transcriptional repressor Rex.